Consider the following 500-residue polypeptide: Probable malate:quinone oxidoreductase (500 aa).

This sequence belongs to the MQO family. The cofactor is FAD.

It carries out the reaction (S)-malate + a quinone = a quinol + oxaloacetate. Its pathway is carbohydrate metabolism; tricarboxylic acid cycle; oxaloacetate from (S)-malate (quinone route): step 1/1. This is Probable malate:quinone oxidoreductase from Bacillus mycoides (strain KBAB4) (Bacillus weihenstephanensis).